The primary structure comprises 455 residues: Kynurenine 3-monooxygenase (455 aa).

This sequence belongs to the aromatic-ring hydroxylase family. KMO subfamily. Requires FAD as cofactor.

It catalyses the reaction L-kynurenine + NADPH + O2 + H(+) = 3-hydroxy-L-kynurenine + NADP(+) + H2O. Its pathway is cofactor biosynthesis; NAD(+) biosynthesis; quinolinate from L-kynurenine: step 1/3. Catalyzes the hydroxylation of L-kynurenine (L-Kyn) to form 3-hydroxy-L-kynurenine (L-3OHKyn). Required for synthesis of quinolinic acid. The protein is Kynurenine 3-monooxygenase of Xanthomonas euvesicatoria pv. vesicatoria (strain 85-10) (Xanthomonas campestris pv. vesicatoria).